The primary structure comprises 95 residues: NLEPLKSHTVVGLDKSCDDGSSDDMSTGMRVLSGRGAFAKFGKPSAAQAQPQPPPPPLGMMHDTNQYQCTMDTIMQAYNPHRNAGGNTQFAYCFN.

Disordered stretches follow at residues 1–29 (NLEPLKSHTVVGLDKSCDDGSSDDMSTGM) and 42–63 (GKPSAAQAQPQPPPPPLGMMHD).

Belongs to the paired homeobox family. Bicoid subfamily.

It is found in the nucleus. In terms of biological role, bicoid is polarity protein that provides positional cues for the development of head and thoracic segments. BCD regulates the expression of zygotic genes, possibly through its homeodomain, and inhibits the activity of other maternal gene products. The chain is Homeotic protein bicoid (bcd) from Drosophila subobscura (Fruit fly).